Reading from the N-terminus, the 178-residue chain is UPF0302 protein BcerKBAB4_1445 (178 aa).

This sequence belongs to the UPF0302 family.

In Bacillus mycoides (strain KBAB4) (Bacillus weihenstephanensis), this protein is UPF0302 protein BcerKBAB4_1445.